We begin with the raw amino-acid sequence, 842 residues long: Alanine--tRNA ligase (842 aa).

His-549, His-553, Cys-650, and His-654 together coordinate Zn(2+).

This sequence belongs to the class-II aminoacyl-tRNA synthetase family. It depends on Zn(2+) as a cofactor.

It localises to the cytoplasm. The enzyme catalyses tRNA(Ala) + L-alanine + ATP = L-alanyl-tRNA(Ala) + AMP + diphosphate. Its function is as follows. Catalyzes the attachment of alanine to tRNA(Ala) in a two-step reaction: alanine is first activated by ATP to form Ala-AMP and then transferred to the acceptor end of tRNA(Ala). Also edits incorrectly charged Ser-tRNA(Ala) and Gly-tRNA(Ala) via its editing domain. This Campylobacter jejuni subsp. doylei (strain ATCC BAA-1458 / RM4099 / 269.97) protein is Alanine--tRNA ligase.